The following is a 983-amino-acid chain: Type IV secretion system protein CagE (983 aa).

An ATP-binding site is contributed by 597–604 (GSTGSGKT).

Belongs to the TrbE/VirB4 family. As to quaternary structure, component of the Cag type IV secretion system, which is composed of a wheel-shaped outer membrane complex (OMC) and an inner membrane complex (IMC). Interacts with CagV and CagBeta.

Its subcellular location is the cell inner membrane. The catalysed reaction is ATP + H2O + cellular proteinSide 1 = ADP + phosphate + cellular proteinSide 2.. Functionally, ATPase component of the type IV secretion system Cag (Cag-T4SS). Acts as a molecular motor to provide the energy that is required for the export of proteins. Required for CagA translocation and induction of IL-8 in host gastric epithelial cells. Plays a key role in Cag-T4SS pilus biogenesis, especially in the localization and stabilization of the pilus-associated components CagI, CagL and the surface protein CagH. Is also critical for assembly of the entire cytoplasmic portion of the Cag inner membrane complex (IMC). The chain is Type IV secretion system protein CagE from Helicobacter pylori (strain ATCC 700392 / 26695) (Campylobacter pylori).